We begin with the raw amino-acid sequence, 91 residues long: DNA-directed RNA polymerase subunit omega (91 aa).

The protein belongs to the RNA polymerase subunit omega family. In terms of assembly, the RNAP catalytic core consists of 2 alpha, 1 beta, 1 beta' and 1 omega subunit. When a sigma factor is associated with the core the holoenzyme is formed, which can initiate transcription.

It catalyses the reaction RNA(n) + a ribonucleoside 5'-triphosphate = RNA(n+1) + diphosphate. Functionally, promotes RNA polymerase assembly. Latches the N- and C-terminal regions of the beta' subunit thereby facilitating its interaction with the beta and alpha subunits. The sequence is that of DNA-directed RNA polymerase subunit omega from Psychromonas ingrahamii (strain DSM 17664 / CCUG 51855 / 37).